We begin with the raw amino-acid sequence, 318 residues long: Trans-prenyltransferase (318 aa).

The helical transmembrane segment at 1–21 (MLHLIYISIIVVLIIILISYT) threads the bilayer. Isopentenyl diphosphate-binding residues include K85, R88, and H122. The Mg(2+) site is built by D129 and D135. Dimethylallyl diphosphate is bound at residue R140. R141 contributes to the isopentenyl diphosphate binding site. 3 residues coordinate dimethylallyl diphosphate: K216, T217, and Q254.

This sequence belongs to the FPP/GGPP synthase family. Asfivirus trans-prenyltransferase subfamily. It depends on Mg(2+) as a cofactor.

Its subcellular location is the host endoplasmic reticulum. It is found in the host membrane. The catalysed reaction is isopentenyl diphosphate + dimethylallyl diphosphate = (2E)-geranyl diphosphate + diphosphate. It catalyses the reaction isopentenyl diphosphate + (2E)-geranyl diphosphate = (2E,6E)-farnesyl diphosphate + diphosphate. It carries out the reaction isopentenyl diphosphate + (2E,6E)-farnesyl diphosphate = (2E,6E,10E)-geranylgeranyl diphosphate + diphosphate. The enzyme catalyses isopentenyl diphosphate + (2E,6E,10E)-geranylgeranyl diphosphate = (2E,6E,10E,14E)-geranylfarnesyl diphosphate + diphosphate. Its pathway is isoprenoid biosynthesis; farnesyl diphosphate biosynthesis; farnesyl diphosphate from geranyl diphosphate and isopentenyl diphosphate: step 1/1. It participates in isoprenoid biosynthesis; geranyl diphosphate biosynthesis; geranyl diphosphate from dimethylallyl diphosphate and isopentenyl diphosphate: step 1/1. It functions in the pathway isoprenoid biosynthesis; geranylgeranyl diphosphate biosynthesis; geranylgeranyl diphosphate from farnesyl diphosphate and isopentenyl diphosphate: step 1/1. Functionally, trans-prenyltransferase that catalyzes the sequential condensation of isopentenyl diphosphate (IPP) with different allylic diphosphates, such as dimethylallyl diphosphate (DMAPP), geranyl diphosphate (GPP), farnesyl diphosphate (FPP) and geranylgeranyl diphosphate (GGPP), farnesyl diphosphate being the best allylic substrate. In African swine fever virus (isolate Tick/Malawi/Lil 20-1/1983) (ASFV), this protein is Trans-prenyltransferase.